The primary structure comprises 264 residues: MDNRPIGFLDSGVGGLTVVRELMRQLPHEEVIYIGDSARAPYGPRPAEQIRDYTWQLVNFLLTKDVKMIVIACNTATAVVWEEIKEKLDIPVLGVILPGASAAIKSTHSGKIGVIGTPMTVTSDIYRKKIEALSPEMEVSSLACPKFVPLVESNELTSSVTKKVVYETLLPLAGKVDTLVLGCTHYPLLRSIIQNVMGPDVKLIDSGAECVRDISVLLNYFEINRSREEQTLRHRFYTTASAKSFAEIAEHWLGQKVSVEHIDL.

Substrate contacts are provided by residues 10 to 11 (DS) and 42 to 43 (YG). Cys-73 acts as the Proton donor/acceptor in catalysis. Position 74-75 (74-75 (NT)) interacts with substrate. Cys-183 functions as the Proton donor/acceptor in the catalytic mechanism. Position 184-185 (184-185 (TH)) interacts with substrate.

The protein belongs to the aspartate/glutamate racemases family.

The catalysed reaction is L-glutamate = D-glutamate. The protein operates within cell wall biogenesis; peptidoglycan biosynthesis. In terms of biological role, provides the (R)-glutamate required for cell wall biosynthesis. The chain is Glutamate racemase from Streptococcus gordonii (strain Challis / ATCC 35105 / BCRC 15272 / CH1 / DL1 / V288).